Here is a 525-residue protein sequence, read N- to C-terminus: GMP synthase [glutamine-hydrolyzing] (525 aa).

The region spanning 9-207 is the Glutamine amidotransferase type-1 domain; the sequence is RILILDFGSQ…VRDICQCEAL (199 aa). The active-site Nucleophile is Cys86. Catalysis depends on residues His181 and Glu183. Residues 208–400 form the GMPS ATP-PPase domain; it reads WTPAKIIDDA…LGLPYDMLYR (193 aa). ATP is bound at residue 235–241; sequence SGGVDSS.

Homodimer.

It carries out the reaction XMP + L-glutamine + ATP + H2O = GMP + L-glutamate + AMP + diphosphate + 2 H(+). Its pathway is purine metabolism; GMP biosynthesis; GMP from XMP (L-Gln route): step 1/1. Catalyzes the synthesis of GMP from XMP. The protein is GMP synthase [glutamine-hydrolyzing] of Salmonella arizonae (strain ATCC BAA-731 / CDC346-86 / RSK2980).